A 177-amino-acid polypeptide reads, in one-letter code: Large ribosomal subunit protein uL5m (177 aa).

It belongs to the universal ribosomal protein uL5 family.

Its subcellular location is the mitochondrion. The polypeptide is Large ribosomal subunit protein uL5m (RPL5) (Acanthamoeba castellanii (Amoeba)).